The following is a 303-amino-acid chain: Probable 5-dehydro-4-deoxyglucarate dehydratase (303 aa).

The protein belongs to the DapA family.

It catalyses the reaction 5-dehydro-4-deoxy-D-glucarate + H(+) = 2,5-dioxopentanoate + CO2 + H2O. The protein operates within carbohydrate acid metabolism; D-glucarate degradation; 2,5-dioxopentanoate from D-glucarate: step 2/2. The chain is Probable 5-dehydro-4-deoxyglucarate dehydratase from Variovorax paradoxus (strain S110).